A 763-amino-acid polypeptide reads, in one-letter code: Protein translocase subunit SecA 2 (763 aa).

Residues Gln83, 101–105, and Asp490 each bind ATP; that span reads GEGKT.

The protein belongs to the SecA family. Monomer and homodimer. Part of the essential Sec protein translocation apparatus which comprises SecA, SecYEG and auxiliary proteins SecDF. Other proteins may also be involved.

It localises to the cell membrane. It is found in the cytoplasm. It catalyses the reaction ATP + H2O + cellular proteinSide 1 = ADP + phosphate + cellular proteinSide 2.. Part of the Sec protein translocase complex. Interacts with the SecYEG preprotein conducting channel. Has a central role in coupling the hydrolysis of ATP to the transfer of proteins into and across the cell membrane, serving as an ATP-driven molecular motor driving the stepwise translocation of polypeptide chains across the membrane. This chain is Protein translocase subunit SecA 2, found in Corynebacterium efficiens (strain DSM 44549 / YS-314 / AJ 12310 / JCM 11189 / NBRC 100395).